A 1322-amino-acid chain; its full sequence is Transcription elongation factor SPT6-like (1322 aa).

Residues 1 to 17 are compositionally biased toward basic and acidic residues; sequence MNRIDEEPQIHEDPVEN. 2 disordered regions span residues 1–65 and 90–113; these read MNRI…KKDE and KRLK…DLSH. Residues 18–33 are compositionally biased toward acidic residues; that stretch reads REEDDEDEDDQYEFDD. The segment covering 48-65 has biased composition (basic and acidic residues); the sequence is EQRHCSEKKSRSRRKKDE. Residues 97 to 110 are compositionally biased toward acidic residues; it reads EEEDKINNDDDDDD. In terms of domain architecture, S1 motif spans 1017-1088; it reads GRIVQATVKK…QRYHVLLVCK (72 aa).

The protein belongs to the SPT6 family.

The protein localises to the nucleus. Functionally, transcription elongation factor that enhances the transcription elongation by RNA polymerase II (RNAPII). This Arabidopsis thaliana (Mouse-ear cress) protein is Transcription elongation factor SPT6-like.